The sequence spans 488 residues: UDP-N-acetylmuramate--L-alanine ligase (488 aa).

Position 129-135 (129-135 (GSHGKTT)) interacts with ATP.

This sequence belongs to the MurCDEF family.

The protein localises to the cytoplasm. The catalysed reaction is UDP-N-acetyl-alpha-D-muramate + L-alanine + ATP = UDP-N-acetyl-alpha-D-muramoyl-L-alanine + ADP + phosphate + H(+). It participates in cell wall biogenesis; peptidoglycan biosynthesis. In terms of biological role, cell wall formation. The polypeptide is UDP-N-acetylmuramate--L-alanine ligase (Prochlorococcus marinus (strain MIT 9303)).